The following is a 552-amino-acid chain: Arginine--tRNA ligase (552 aa).

The 'HIGH' region motif lies at 129–139 (ANPTGPVTLAS).

Belongs to the class-I aminoacyl-tRNA synthetase family. Monomer.

The protein resides in the cytoplasm. The catalysed reaction is tRNA(Arg) + L-arginine + ATP = L-arginyl-tRNA(Arg) + AMP + diphosphate. This chain is Arginine--tRNA ligase, found in Frankia alni (strain DSM 45986 / CECT 9034 / ACN14a).